A 390-amino-acid chain; its full sequence is Dual-specificity RNA methyltransferase RlmN (390 aa).

The active-site Proton acceptor is E111. The region spanning 117–356 (EDDRATLCVS…VIVRKTRGDD (240 aa)) is the Radical SAM core domain. C124 and C361 are disulfide-bonded. [4Fe-4S] cluster is bound by residues C131, C135, and C138. S-adenosyl-L-methionine-binding positions include 185–186 (GE), S217, 239–241 (SLH), and N318. The active-site S-methylcysteine intermediate is the C361.

It belongs to the radical SAM superfamily. RlmN family. The cofactor is [4Fe-4S] cluster.

It is found in the cytoplasm. The enzyme catalyses adenosine(2503) in 23S rRNA + 2 reduced [2Fe-2S]-[ferredoxin] + 2 S-adenosyl-L-methionine = 2-methyladenosine(2503) in 23S rRNA + 5'-deoxyadenosine + L-methionine + 2 oxidized [2Fe-2S]-[ferredoxin] + S-adenosyl-L-homocysteine. The catalysed reaction is adenosine(37) in tRNA + 2 reduced [2Fe-2S]-[ferredoxin] + 2 S-adenosyl-L-methionine = 2-methyladenosine(37) in tRNA + 5'-deoxyadenosine + L-methionine + 2 oxidized [2Fe-2S]-[ferredoxin] + S-adenosyl-L-homocysteine. Functionally, specifically methylates position 2 of adenine 2503 in 23S rRNA and position 2 of adenine 37 in tRNAs. m2A2503 modification seems to play a crucial role in the proofreading step occurring at the peptidyl transferase center and thus would serve to optimize ribosomal fidelity. This is Dual-specificity RNA methyltransferase RlmN from Edwardsiella ictaluri (strain 93-146).